The primary structure comprises 190 residues: Translation initiation factor IF-3 (190 aa).

Belongs to the IF-3 family. In terms of assembly, monomer.

The protein localises to the cytoplasm. Functionally, IF-3 binds to the 30S ribosomal subunit and shifts the equilibrium between 70S ribosomes and their 50S and 30S subunits in favor of the free subunits, thus enhancing the availability of 30S subunits on which protein synthesis initiation begins. The protein is Translation initiation factor IF-3 of Prochlorococcus marinus (strain MIT 9312).